The following is a 338-amino-acid chain: MKVYYDKDADLSLIKKKKIAIIGYGSQGHAHANNLNDSGVEVIIGLRKDGASWDKAKKAGLTVKEVSEAVKDADIVMLLLPDEQMASIYQTEVEPALKKNATLAFAHGFNIHYGQIIPREDLDIIMIAPKGPGHLVRSTYIQGGGVPSLIAVHQDKSGKARDLALSYAAANGGTRGGVIETTFKEETETDLFGEQVVLCGGLTSLIQAGFETLVEAGYAPEMAYFECLHEVKLIVDLIYEGGIANMRYSVSNNAEYGDVSRGPRIITEATRNEMRKILREIQTGEYAREFILEHRAGAPVLKSSRRLASEHLIETVGSRLRDMMPWIKKNKLVDQAKN.

The KARI N-terminal Rossmann domain occupies 1–181 (MKVYYDKDAD…GGTRGGVIET (181 aa)). NADP(+) contacts are provided by residues 24-27 (YGSQ), R47, and S52. Residue H107 is part of the active site. NADP(+) is bound at residue G133. The region spanning 182–327 (TFKEETETDL…SRLRDMMPWI (146 aa)) is the KARI C-terminal knotted domain. Mg(2+)-binding residues include D190, E194, E226, and E230. S251 is a substrate binding site.

This sequence belongs to the ketol-acid reductoisomerase family. Mg(2+) serves as cofactor.

It catalyses the reaction (2R)-2,3-dihydroxy-3-methylbutanoate + NADP(+) = (2S)-2-acetolactate + NADPH + H(+). It carries out the reaction (2R,3R)-2,3-dihydroxy-3-methylpentanoate + NADP(+) = (S)-2-ethyl-2-hydroxy-3-oxobutanoate + NADPH + H(+). It functions in the pathway amino-acid biosynthesis; L-isoleucine biosynthesis; L-isoleucine from 2-oxobutanoate: step 2/4. The protein operates within amino-acid biosynthesis; L-valine biosynthesis; L-valine from pyruvate: step 2/4. Involved in the biosynthesis of branched-chain amino acids (BCAA). Catalyzes an alkyl-migration followed by a ketol-acid reduction of (S)-2-acetolactate (S2AL) to yield (R)-2,3-dihydroxy-isovalerate. In the isomerase reaction, S2AL is rearranged via a Mg-dependent methyl migration to produce 3-hydroxy-3-methyl-2-ketobutyrate (HMKB). In the reductase reaction, this 2-ketoacid undergoes a metal-dependent reduction by NADPH to yield (R)-2,3-dihydroxy-isovalerate. The protein is Ketol-acid reductoisomerase (NADP(+)) of Nitrosomonas eutropha (strain DSM 101675 / C91 / Nm57).